The sequence spans 774 residues: E3 ubiquitin-protein ligase UHRF1 (774 aa).

The 78-residue stretch at 1–78 (MWIQVRTMDG…IQLLVRQSLA (78 aa)) folds into the Ubiquitin-like domain. Ser76, Ser91, Ser93, Ser95, and Ser161 each carry phosphoserine. The disordered stretch occupies residues 83-120 (TKERDSELSDSDSGYGVGHSESDKSSTHGEGTADGDDK). 2 tudor-like regions span residues 129 to 205 (GLYK…ARAR) and 212 to 280 (DLEV…IELP). A Glycyl lysine isopeptide (Lys-Gly) (interchain with G-Cter in SUMO2) cross-link involves residue Lys276. Position 284 is a phosphoserine (Ser284). The linker stretch occupies residues 293 to 298 (RKSGPS). Ser295 is modified (phosphoserine; by PKA). The PHD-type zinc-finger motif lies at 296 to 363 (GPSCQYCKDD…EWYCPSCRTD (68 aa)). 2 histone H3R2me0 binding regions span residues 330–334 (CDECD) and 350–352 (PPE). A Phosphoserine modification is found at Ser365. A Glycyl lysine isopeptide (Lys-Gly) (interchain with G-Cter in SUMO2) cross-link involves residue Lys382. The tract at residues 382–605 (KMASATSSSR…QLGLTMQYPE (224 aa)) is methyl-CpG binding and interaction with HDAC1. Lys396 is modified (N6-acetyllysine). The region spanning 416–578 (GPIPGVPVGT…FIVWRYLLRR (163 aa)) is the YDG domain. Positions 442 to 443 (HV) are required to promote base flipping. DNA is bound by residues 460–461 (AG) and Asp466. Required for formation of a 5-methylcytosine-binding pocket stretches follow at residues 463–466 (YEDD) and 475–478 (YTGS). Position 511 is a phosphoserine (Ser511). An N6-acetyllysine; alternate modification is found at Lys542. A Glycyl lysine isopeptide (Lys-Gly) (interchain with G-Cter in SUMO2); alternate cross-link involves residue Lys542. The disordered stretch occupies residues 616 to 657 (KNRKRPAKALEQGPSSSKIGKSKRKSTGPATTSPRVSKKSKL). A Phosphoserine; by CDK1 modification is found at Ser631. Ser641 and Ser648 each carry phosphoserine. Lys656 is covalently cross-linked (Glycyl lysine isopeptide (Lys-Gly) (interchain with G-Cter in SUMO2)). The segment at 705–744 (CICCQELVFRPVTTVCQHNVCKDCLDRSFRAQVFSCPACR) adopts an RING-type zinc-finger fold. Phosphoserine is present on Ser751.

Interacts with DNMT3A and DNMT3B. Interacts with DNMT1; the interaction is direct. Interacts with USP7; leading to its deubiquitination. Interacts with histone H3. Interacts with HDAC1, but not with HDAC2. Interacts with BLTP3A. Interacts with PML. Interacts with EHMT2. Binds methylated CpG containing oligonucleotides. Interacts with ZNF263; recruited to the SIX3 promoter along with other proteins involved in chromatin modification and transcriptional corepression where it contributes to transcriptional repression. Interacts with UHRF2. Interacts with FANCD2. Interacts with TET1 isoform 2; this interaction induces the recruitment of TET1 isoform 2 to replicating heterochromatin. Phosphorylation at Ser-295 of the linker region decreases the binding to H3K9me3. Phosphorylation at Ser-631 by CDK1 during M phase impairs interaction with USP7, preventing deubiquitination and leading to degradation by the proteasome. In terms of processing, ubiquitinated; which leads to proteasomal degradation. Autoubiquitinated; interaction with USP7 leads to deubiquitination and prevents degradation. Ubiquitination and degradation takes place during M phase, when phosphorylation at Ser-631 prevents interaction with USP7 and subsequent deubiquitination. Polyubiquitination may be stimulated by DNA damage.

It is found in the nucleus. It catalyses the reaction S-ubiquitinyl-[E2 ubiquitin-conjugating enzyme]-L-cysteine + [acceptor protein]-L-lysine = [E2 ubiquitin-conjugating enzyme]-L-cysteine + N(6)-ubiquitinyl-[acceptor protein]-L-lysine.. It functions in the pathway protein modification; protein ubiquitination. Multidomain protein that acts as a key epigenetic regulator by bridging DNA methylation and chromatin modification. Specifically recognizes and binds hemimethylated DNA at replication forks via its YDG domain and recruits DNMT1 methyltransferase to ensure faithful propagation of the DNA methylation patterns through DNA replication. In addition to its role in maintenance of DNA methylation, also plays a key role in chromatin modification: through its tudor-like regions and PHD-type zinc fingers, specifically recognizes and binds histone H3 trimethylated at 'Lys-9' (H3K9me3) and unmethylated at 'Arg-2' (H3R2me0), respectively, and recruits chromatin proteins. Enriched in pericentric heterochromatin where it recruits different chromatin modifiers required for this chromatin replication. Also localizes to euchromatic regions where it negatively regulates transcription possibly by impacting DNA methylation and histone modifications. Has E3 ubiquitin-protein ligase activity by mediating the ubiquitination of target proteins such as histone H3 and PML. It is still unclear how E3 ubiquitin-protein ligase activity is related to its role in chromatin in vivo. Plays a role in DNA repair by cooperating with UHRF2 to ensure recruitment of FANCD2 to interstrand cross-links (ICLs) leading to FANCD2 activation. Plays a pivotal role in the establishment of correct spindle architecture by catalyzing the 'Lys-63'-linked ubiquitination of KIF11, thereby controlling KIF11 localization on the spindle. This Rattus norvegicus (Rat) protein is E3 ubiquitin-protein ligase UHRF1 (Uhrf1).